A 453-amino-acid polypeptide reads, in one-letter code: tRNA modification GTPase MnmE (453 aa).

Residues R22, E79, and K119 each contribute to the (6S)-5-formyl-5,6,7,8-tetrahydrofolate site. One can recognise a TrmE-type G domain in the interval 215-376; sequence GMKVVIAGRP…LKQHLKSLMG (162 aa). K(+) is bound at residue N225. Residues 225 to 230, 244 to 250, 269 to 272, and 334 to 337 contribute to the GTP site; these read NAGKSS, TEIAGTT, DTAG, and NKAD. S229 is a Mg(2+) binding site. T244, I246, and T249 together coordinate K(+). Position 250 (T250) interacts with Mg(2+). (6S)-5-formyl-5,6,7,8-tetrahydrofolate is bound at residue K453.

The protein belongs to the TRAFAC class TrmE-Era-EngA-EngB-Septin-like GTPase superfamily. TrmE GTPase family. In terms of assembly, homodimer. Heterotetramer of two MnmE and two MnmG subunits. It depends on K(+) as a cofactor.

The protein localises to the cytoplasm. Its function is as follows. Exhibits a very high intrinsic GTPase hydrolysis rate. Involved in the addition of a carboxymethylaminomethyl (cmnm) group at the wobble position (U34) of certain tRNAs, forming tRNA-cmnm(5)s(2)U34. This chain is tRNA modification GTPase MnmE, found in Shewanella baltica (strain OS155 / ATCC BAA-1091).